The primary structure comprises 308 residues: MLTVQELVDDNADNIPFNWIAGHGAADRAIPDDGMAAADLVGHLNLIHPSRVQVFGQEELAYYTRFDLRRRMHHMDELLIGGVPAILLADGLSAPQDLIDQCDQHQVPLLSTPVAAAQLIDLLRIYLGKKLAPTTTVHGVFLDVLGLGVLITGESGLGKSELALELISRGHGLVADDAVEFSRTAPNMIEGHCPQLLQNLLEVRGLGLLDIRTIFGETSVRRKMRLKLIVHLVRATAQDKFERLPLQDITQDMLGLPVRKVMLQVAAGRNLAVLVEAAVRNTILKLRGIDTLGEFMERQAMAILQSSK.

Catalysis depends on residues H138 and K159. An ATP-binding site is contributed by 153-160 (GESGLGKS). Residue S160 participates in Mg(2+) binding. D177 (proton acceptor; for phosphorylation activity. Proton donor; for dephosphorylation activity) is an active-site residue. An important for the catalytic mechanism of both phosphorylation and dephosphorylation region spans residues 201–210 (LEVRGLGLLD). Residue E202 participates in Mg(2+) binding. R243 is a catalytic residue. Positions 264–269 (QVAAGR) are important for the catalytic mechanism of dephosphorylation.

It belongs to the HPrK/P family. Homohexamer. It depends on Mg(2+) as a cofactor.

It carries out the reaction [HPr protein]-L-serine + ATP = [HPr protein]-O-phospho-L-serine + ADP + H(+). The catalysed reaction is [HPr protein]-O-phospho-L-serine + phosphate + H(+) = [HPr protein]-L-serine + diphosphate. Catalyzes the ATP- as well as the pyrophosphate-dependent phosphorylation of a specific serine residue in HPr, a phosphocarrier protein of the phosphoenolpyruvate-dependent sugar phosphotransferase system (PTS). HprK/P also catalyzes the pyrophosphate-producing, inorganic phosphate-dependent dephosphorylation (phosphorolysis) of seryl-phosphorylated HPr (P-Ser-HPr). This chain is HPr kinase/phosphorylase, found in Bordetella avium (strain 197N).